We begin with the raw amino-acid sequence, 392 residues long: S-adenosylmethionine synthase (392 aa).

His22 lines the ATP pocket. Position 24 (Asp24) interacts with Mg(2+). Glu50 is a binding site for K(+). L-methionine is bound by residues Glu63 and Gln106. The segment at 106-116 is flexible loop; that stretch reads QSPDITQGVTL. ATP is bound by residues 170 to 172, 236 to 237, Asp245, 251 to 252, Ala268, and Lys272; these read DGK, KF, and RK. Position 245 (Asp245) interacts with L-methionine. Lys276 contacts L-methionine.

Belongs to the AdoMet synthase family. In terms of assembly, homotetramer; dimer of dimers. Mg(2+) is required as a cofactor. It depends on K(+) as a cofactor.

Its subcellular location is the cytoplasm. It carries out the reaction L-methionine + ATP + H2O = S-adenosyl-L-methionine + phosphate + diphosphate. It functions in the pathway amino-acid biosynthesis; S-adenosyl-L-methionine biosynthesis; S-adenosyl-L-methionine from L-methionine: step 1/1. In terms of biological role, catalyzes the formation of S-adenosylmethionine (AdoMet) from methionine and ATP. The overall synthetic reaction is composed of two sequential steps, AdoMet formation and the subsequent tripolyphosphate hydrolysis which occurs prior to release of AdoMet from the enzyme. The polypeptide is S-adenosylmethionine synthase (Sulfurimonas denitrificans (strain ATCC 33889 / DSM 1251) (Thiomicrospira denitrificans (strain ATCC 33889 / DSM 1251))).